The following is a 553-amino-acid chain: Putative transport protein YidE (553 aa).

The next 5 membrane-spanning stretches (helical) occupy residues 4–24 (IALT…IGNV), 28–48 (GIGL…HFVS), 65–85 (FGLI…FFAS), 95–115 (LFAV…HKLF), and 158–178 (MSYA…MWML). RCK C-terminal domains follow at residues 191–276 (QQHE…VIGQ) and 279–361 (DTSL…VLGN). 6 consecutive transmembrane segments (helical) span residues 371-391 (MLPV…PVFV), 393-413 (GFPA…ALIL), 439-459 (IVLF…NTLV), 464-484 (LSWI…VGIL), 493-513 (YLTM…LAFA), and 533-553 (LVMF…WSIG).

Belongs to the AAE transporter (TC 2.A.81) family. YidE subfamily.

It is found in the cell membrane. The chain is Putative transport protein YidE from Shigella flexneri serotype 5b (strain 8401).